The sequence spans 502 residues: TGF-beta-activated kinase 1 and MAP3K7-binding protein 1 (502 aa).

The interval 1–21 (MAAQRRSLLQSEQQPSWTDDL) is disordered. S7 bears the Phosphoserine mark. Residues 7–17 (SLLQSEQQPSW) are compositionally biased toward polar residues. One can recognise a PPM-type phosphatase domain in the interval 28–365 (GVGSASNRSY…EDMTLLVRNF (338 aa)). An O-linked (GlcNAc) serine glycan is attached at S393. Over residues 414 to 437 (QMVNGSHSASTLDEATPTLTNQSP) the composition is skewed to polar residues. Positions 414–476 (QMVNGSHSAS…SLPPGEDGRV (63 aa)) are disordered. The residue at position 421 (S421) is a Phosphoserine. The residue at position 429 (T429) is a Phosphothreonine. At S436 the chain carries Phosphoserine. The span at 438-455 (TLTLQSTNTHTQSSSSSS) shows a compositional bias: low complexity. T440 bears the Phosphothreonine mark.

Interacts with XIAP and BIRC7. Interacts with TRAF6 and MAP3K7; during IL-1 signaling. Identified in the TRIKA2 complex composed of MAP3K7, TAB1 and TAB2. Interacts with TRAF6 and MAPK14; these interactions allow MAPK14 autophosphorylation. Interacts with STING1; interaction takes place following cGAMP activation and promotes TAB1 recruitment to the endoplasmic reticulum, triggering MAP3K7/TAK1 activation and STING1 phosphorylation. Phosphorylated at all three sites Ser-421, Thr-429 and Ser-436 by MAPK14 when cells were exposed to cellular stresses, or stimulated with TNF-alpha, IL1 or LPS. These phosphorylations inhibit TAK1 activation by a feedback control mechanism. Dephosphorylated by DUSP14 at Ser-436, leading to TAB1-MAP3K7/TAK1 complex inactivation in T-cells. In terms of processing, ubiquitinated by MAP3K1 with 'Lys-63'-linked polyubiquitin; leading to activation of TAK1 and of JNK and p38 MAP kinases following EGF and TGF-beta stimulation. Ubiquitinated by ITCH with 'Lys-48'-linked polyubiquitin; leading to proteasomal degradation. Ubiquitinated by RNF114 during maternal-to-zygotic transition; leading to degradation. Post-translationally, O-GlcNAcylated at Ser-393 is required for full MAP3K7/TAK1 activation upon stimulation with IL-1 or osmotic stress.

It localises to the cytoplasm. Its subcellular location is the cytosol. The protein resides in the endoplasmic reticulum membrane. Key adapter protein that plays an essential role in JNK and NF-kappa-B activation and proinflammatory cytokines production in response to stimulation with TLRs and cytokines. Mechanistically, associates with the catalytic domain of MAP3K7/TAK1 to trigger MAP3K7/TAK1 autophosphorylation leading to its full activation. Similarly, associates with MAPK14 and triggers its autophosphorylation and subsequent activation. In turn, MAPK14 phosphorylates TAB1 and inhibits MAP3K7/TAK1 activation in a feedback control mechanism. Also plays a role in recruiting MAPK14 to the TAK1 complex for the phosphorylation of the TAB2 and TAB3 regulatory subunits. In Mus musculus (Mouse), this protein is TGF-beta-activated kinase 1 and MAP3K7-binding protein 1 (Tab1).